The following is a 494-amino-acid chain: Cytochrome P450 2C44 (494 aa).

The first 25 residues, 1-25 (MELLGLPTLALLVLVMSLSLLSVWT), serve as a signal peptide directing secretion. Position 131 is a phosphoserine (serine 131). N6-acetyllysine occurs at positions 253 and 379. Cysteine 439 provides a ligand contact to heme.

Belongs to the cytochrome P450 family. Heme is required as a cofactor. In terms of tissue distribution, highly expressed in liver, particularly in hepatocytes and bile duct epithelial cells (at protein level). Expressed in nephron segments. Prominent expression is detected in proximal tubules at the corticomedullary junction (at protein level). Also expressed in renal cortical collecting duct. Lower expression levels are detected in adrenal glands.

The protein localises to the endoplasmic reticulum membrane. Its subcellular location is the microsome membrane. The catalysed reaction is (5Z,8Z,11Z,14Z)-eicosatetraenoate + reduced [NADPH--hemoprotein reductase] + O2 = (8R,9S)-epoxy-(5Z,11Z,14Z)-eicosatrienoate + oxidized [NADPH--hemoprotein reductase] + H2O + H(+). It carries out the reaction (5Z,8Z,11Z,14Z)-eicosatetraenoate + reduced [NADPH--hemoprotein reductase] + O2 = (11R,12S)-epoxy-(5Z,8Z,14Z)-eicosatrienoate + oxidized [NADPH--hemoprotein reductase] + H2O + H(+). The enzyme catalyses (5Z,8Z,11Z,14Z)-eicosatetraenoate + reduced [NADPH--hemoprotein reductase] + O2 = 14,15-epoxy-(5Z,8Z,11Z)-eicosatrienoate + oxidized [NADPH--hemoprotein reductase] + H2O + H(+). It catalyses the reaction (5Z,8Z,11Z,14Z,17Z)-eicosapentaenoate + reduced [NADPH--hemoprotein reductase] + O2 = 8,9-epoxy-(5Z,11Z,14Z,17Z)-eicosatetraenoate + oxidized [NADPH--hemoprotein reductase] + H2O + H(+). The catalysed reaction is (5Z,8Z,11Z,14Z,17Z)-eicosapentaenoate + reduced [NADPH--hemoprotein reductase] + O2 = 11,12-epoxy-(5Z,8Z,14Z,17Z)-eicosatetraenoate + oxidized [NADPH--hemoprotein reductase] + H2O + H(+). It carries out the reaction (5Z,8Z,11Z,14Z,17Z)-eicosapentaenoate + reduced [NADPH--hemoprotein reductase] + O2 = 14,15-epoxy-(5Z,8Z,11Z,17Z)-eicosatetraenoate + oxidized [NADPH--hemoprotein reductase] + H2O + H(+). The enzyme catalyses (5Z,8Z,11Z,14Z,17Z)-eicosapentaenoate + reduced [NADPH--hemoprotein reductase] + O2 = (17R,18S)-epoxy-(5Z,8Z,11Z,14Z)-eicosatetraenoate + oxidized [NADPH--hemoprotein reductase] + H2O + H(+). It catalyses the reaction (5Z,8Z,11Z,14Z,17Z)-eicosapentaenoate + reduced [NADPH--hemoprotein reductase] + O2 = (17S,18R)-epoxy-(5Z,8Z,11Z,14Z)-eicosatetraenoate + oxidized [NADPH--hemoprotein reductase] + H2O + H(+). The catalysed reaction is 20-hydroxy-(5Z,8Z,11Z,14Z)-eicosatetraenoate + reduced [NADPH--hemoprotein reductase] + O2 = 20-hydroxy-8,9-epoxy-(5Z,11Z,14Z)-eicosatrienoate + oxidized [NADPH--hemoprotein reductase] + H2O + H(+). It participates in lipid metabolism; arachidonate metabolism. A cytochrome P450 monooxygenase involved in polyunsaturated fatty acids (PUFAs) metabolism and signaling. Catalyzes preferentially the epoxidation of double bonds of PUFAs. Converts arachidonic acid (ARA, C20:4(n-6)) primarily to stereospecific products 8R,9S-epoxyeicosatrienoate (EET) and 11R,12S-EET. Plays a major role in the formation of EETs and hydroxy-EETs (HEETs) in kidney. Via EETs may inhibit the epithelial sodium channels (ENaCs) in nephron segments, preventing excessive sodium absorption during high dietary salt intake. Participates in the formation of anti-inflammatory hydroxyepoxyeicosatrienoic acids (HEETs) by converting 20-hydroxyeicosatetraenoic acid (20-HETE) to 20,8,9-HEET, an activator of PPARA. Metabolizes eicosapentaenoic acid (EPA, C20:5(n-3)) to epoxyeicosatetraenoic acid (EETeTr) regioisomers, 8,9-, 11,12-, 14,15-, and 17,18- EETeTr, preferentially producing 17R,18S enantiomer. Mechanistically, uses molecular oxygen inserting one oxygen atom into a substrate, and reducing the second into a water molecule, with two electrons provided by NADPH via cytochrome P450 reductase (CPR; NADPH-ferrihemoprotein reductase). The polypeptide is Cytochrome P450 2C44 (Mus musculus (Mouse)).